The following is an 81-amino-acid chain: Defensin-like protein 45 (81 aa).

An N-terminal signal peptide occupies residues 1-27 (MAITKTSATFVLLIILAASLSNFNVLA). 4 cysteine pairs are disulfide-bonded: Cys40-Cys79, Cys44-Cys67, Cys53-Cys77, and Cys57-Cys78.

It belongs to the DEFL family.

Its subcellular location is the secreted. The chain is Defensin-like protein 45 from Arabidopsis thaliana (Mouse-ear cress).